Here is a 181-residue protein sequence, read N- to C-terminus: Probable cobalt-precorrin-6B C(15)-methyltransferase (decarboxylating) (181 aa).

Residues T16, 40-44, D61, and A89 contribute to the S-adenosyl-L-methionine site; that span reads GCGSG.

This sequence belongs to the methyltransferase superfamily. Archaeal-type CbiT family.

The enzyme catalyses Co-precorrin-6B + S-adenosyl-L-methionine = Co-precorrin-7 + S-adenosyl-L-homocysteine + CO2. Its pathway is cofactor biosynthesis; adenosylcobalamin biosynthesis; cob(II)yrinate a,c-diamide from sirohydrochlorin (anaerobic route): step 8/10. Functionally, catalyzes the methylation of C-15 in cobalt-precorrin-6B followed by the decarboxylation of C-12 to form cobalt-precorrin-7. In Methanococcus maripaludis (strain DSM 14266 / JCM 13030 / NBRC 101832 / S2 / LL), this protein is Probable cobalt-precorrin-6B C(15)-methyltransferase (decarboxylating).